Consider the following 134-residue polypeptide: Arsenate reductase 1 (134 aa).

Catalysis depends on nucleophile residues Cys11, Cys83, and Cys90. Intrachain disulfides connect Cys11/Cys83 and Cys83/Cys90.

The protein belongs to the low molecular weight phosphotyrosine protein phosphatase family. Thioredoxin-coupled ArsC subfamily.

Its subcellular location is the cytoplasm. It catalyses the reaction arsenate + [thioredoxin]-dithiol + H(+) = arsenite + [thioredoxin]-disulfide + H2O. In terms of biological role, catalyzes the reduction of arsenate [As(V)] to arsenite [As(III)]. This is Arsenate reductase 1 from Bacillus cereus (strain ATCC 10987 / NRS 248).